A 130-amino-acid chain; its full sequence is Cytochrome b-c1 complex subunit 7 (130 aa).

This sequence belongs to the UQCRB/QCR7 family. As to quaternary structure, component of the ubiquinol-cytochrome c oxidoreductase (cytochrome b-c1 complex, complex III, CIII), a multisubunit enzyme composed of 3 respiratory subunits cytochrome b, cytochrome c1 and Rieske protein, 2 core protein subunits, and additional low-molecular weight protein subunits. The complex exists as an obligatory dimer and forms supercomplexes (SCs) in the inner mitochondrial membrane with cytochrome c oxidase (complex IV, CIV).

The protein resides in the mitochondrion inner membrane. Functionally, component of the ubiquinol-cytochrome c oxidoreductase, a multisubunit transmembrane complex that is part of the mitochondrial electron transport chain which drives oxidative phosphorylation. The respiratory chain contains 3 multisubunit complexes succinate dehydrogenase (complex II, CII), ubiquinol-cytochrome c oxidoreductase (cytochrome b-c1 complex, complex III, CIII) and cytochrome c oxidase (complex IV, CIV), that cooperate to transfer electrons derived from NADH and succinate to molecular oxygen, creating an electrochemical gradient over the inner membrane that drives transmembrane transport and the ATP synthase. The cytochrome b-c1 complex catalyzes electron transfer from ubiquinol to cytochrome c, linking this redox reaction to translocation of protons across the mitochondrial inner membrane, with protons being carried across the membrane as hydrogens on the quinol. In the process called Q cycle, 2 protons are consumed from the matrix, 4 protons are released into the intermembrane space and 2 electrons are passed to cytochrome c. The polypeptide is Cytochrome b-c1 complex subunit 7 (Schistosoma mansoni (Blood fluke)).